We begin with the raw amino-acid sequence, 196 residues long: uncharacterized protein (196 aa).

The segment at 1–21 is disordered; the sequence is MQPEVEPLISPNLGAPGSHRE.

This is an uncharacterized protein from Mus musculus (Mouse).